We begin with the raw amino-acid sequence, 279 residues long: Tryptophan 2,3-dioxygenase (279 aa).

Residues 48 to 52, Tyr110, and Arg114 each bind substrate; that span reads FIIQH. His237 contributes to the heme binding site. Thr251 contacts substrate.

It belongs to the tryptophan 2,3-dioxygenase family. In terms of assembly, homotetramer. Requires heme as cofactor.

It carries out the reaction L-tryptophan + O2 = N-formyl-L-kynurenine. The protein operates within amino-acid degradation; L-tryptophan degradation via kynurenine pathway; L-kynurenine from L-tryptophan: step 1/2. Heme-dependent dioxygenase that catalyzes the oxidative cleavage of the L-tryptophan (L-Trp) pyrrole ring and converts L-tryptophan to N-formyl-L-kynurenine. Catalyzes the oxidative cleavage of the indole moiety. The protein is Tryptophan 2,3-dioxygenase of Bradyrhizobium sp. (strain ORS 278).